Reading from the N-terminus, the 448-residue chain is Antizyme inhibitor 1 (448 aa).

Belongs to the Orn/Lys/Arg decarboxylase class-II family. ODC antizyme inhibitor subfamily. Monomer. Interacts with OAZ1 and OAZ3; this interaction disrupts the interaction between the antizyme and ODC1. Post-translationally, ubiquitinated, leading to its proteasomal degradation; a process that is reduced in presence of antizyme OAZ1.

Its subcellular location is the nucleus. Functionally, antizyme inhibitor (AZI) protein that positively regulates ornithine decarboxylase (ODC) activity and polyamine uptake. AZI is an enzymatically inactive ODC homolog that counteracts the negative effect of ODC antizymes (AZs) OAZ1, OAZ2 and OAZ3 on ODC activity by competing with ODC for antizyme-binding. Inhibits antizyme-dependent ODC degradation and releases ODC monomers from their inactive complex with antizymes, leading to formation of the catalytically active ODC homodimer and restoring polyamine production. This is Antizyme inhibitor 1 (AZIN1) from Pongo abelii (Sumatran orangutan).